Here is a 248-residue protein sequence, read N- to C-terminus: 4-hydroxy-tetrahydrodipicolinate reductase (248 aa).

Residues 9 to 14 (GARGKV), 77 to 79 (GTT), and 104 to 107 (APNF) contribute to the NAD(+) site. Catalysis depends on His134, which acts as the Proton donor/acceptor. His135 contributes to the (S)-2,3,4,5-tetrahydrodipicolinate binding site. Residue Lys138 is the Proton donor of the active site. (S)-2,3,4,5-tetrahydrodipicolinate is bound at residue 144-145 (GT).

This sequence belongs to the DapB family.

It is found in the cytoplasm. The enzyme catalyses (S)-2,3,4,5-tetrahydrodipicolinate + NAD(+) + H2O = (2S,4S)-4-hydroxy-2,3,4,5-tetrahydrodipicolinate + NADH + H(+). The catalysed reaction is (S)-2,3,4,5-tetrahydrodipicolinate + NADP(+) + H2O = (2S,4S)-4-hydroxy-2,3,4,5-tetrahydrodipicolinate + NADPH + H(+). The protein operates within amino-acid biosynthesis; L-lysine biosynthesis via DAP pathway; (S)-tetrahydrodipicolinate from L-aspartate: step 4/4. Its function is as follows. Catalyzes the conversion of 4-hydroxy-tetrahydrodipicolinate (HTPA) to tetrahydrodipicolinate. The protein is 4-hydroxy-tetrahydrodipicolinate reductase of Nocardia farcinica (strain IFM 10152).